The chain runs to 354 residues: Pyruvate dehydrogenase E1 component subunit alpha (354 aa).

The tract at residues 1 to 29 (MAKATQDSNRPHKADVGSAIPNHDLPPIP) is disordered.

Heterodimer of an alpha and a beta chain. Requires thiamine diphosphate as cofactor.

It carries out the reaction N(6)-[(R)-lipoyl]-L-lysyl-[protein] + pyruvate + H(+) = N(6)-[(R)-S(8)-acetyldihydrolipoyl]-L-lysyl-[protein] + CO2. Functionally, the pyruvate dehydrogenase complex catalyzes the overall conversion of pyruvate to acetyl-CoA and CO(2). It contains multiple copies of three enzymatic components: pyruvate dehydrogenase (E1), dihydrolipoamide acetyltransferase (E2) and lipoamide dehydrogenase (E3). The sequence is that of Pyruvate dehydrogenase E1 component subunit alpha (pdhA) from Zymomonas mobilis subsp. mobilis (strain ATCC 31821 / ZM4 / CP4).